The sequence spans 468 residues: Immunoglobulin superfamily member 21 (468 aa).

The signal sequence occupies residues 1–24 (MRAAPSLRRASCLLLAAILDLARG). Ig-like domains lie at 25–132 (YLTV…VVLA) and 344–429 (PKIM…TRLI). Cys46 and Cys116 form a disulfide bridge.

In terms of assembly, interacts (Ig-like 1 domain) with NRXN2 (via Laminin G-like 1 domain) in a trans-interaction manner. In terms of tissue distribution, expressed in brain.

The protein localises to the postsynaptic cell membrane. Involved in synaptic inhibition in the brain. Selectively regulates inhibitory presynaptic differentiation through interacting with presynaptic NRXN2. This is Immunoglobulin superfamily member 21 from Rattus norvegicus (Rat).